The sequence spans 946 residues: Structure-specific endonuclease subunit SLX4 (946 aa).

The segment covering 1 to 14 (MPASPLPALSPPAS) has biased composition (pro residues). 7 disordered regions span residues 1-35 (MPAS…IPPD), 54-119 (QHFD…EEAV), 147-318 (PSDE…GGFT), 339-399 (ADSA…AAQL), 416-471 (TKVP…PKHI), 577-748 (FPLL…GSGR), and 765-799 (ALSP…KADS). A compositionally biased stretch (basic and acidic residues) spans 54 to 74 (QHFDDDIAGKDQEQSRKKSPE). Composition is skewed to basic residues over residues 160–169 (KAGKPRKPRA) and 182–195 (KPKR…KAAK). The span at 278–287 (AVSRRRDWTP) shows a compositional bias: basic and acidic residues. Residues 453-469 (SKARSKKASTKAAAKPK) show a composition bias toward basic residues. Residues 627–636 (KANDEPDHVM) show a composition bias toward basic and acidic residues. A compositionally biased stretch (polar residues) spans 707 to 717 (KSQSAIATSGS). Residues 722–733 (KEPKRTKGKEVK) show a composition bias toward basic and acidic residues.

It belongs to the SLX4 family. In terms of assembly, forms a heterodimer with SLX1. In terms of processing, phosphorylated in response to DNA damage.

It is found in the nucleus. Its function is as follows. Regulatory subunit of the SLX1-SLX4 structure-specific endonuclease that resolves DNA secondary structures generated during DNA repair and recombination. Has endonuclease activity towards branched DNA substrates, introducing single-strand cuts in duplex DNA close to junctions with ss-DNA. This is Structure-specific endonuclease subunit SLX4 from Phaeosphaeria nodorum (strain SN15 / ATCC MYA-4574 / FGSC 10173) (Glume blotch fungus).